Here is a 370-residue protein sequence, read N- to C-terminus: MNWKKYINRFKSRDLSENGLPTSILLIIGIIVVSIIVDLFIQKSLLLVPLISSIIISAIITKWGIIKLKKINCRQVVRKEGPSGHFQKSGTPSMGGIFIVPISLILTNLFALSNNTFSKQLVALSFLSLAYMLIGLIDDWQSITLKRNKGLSVKSKVILQTIVGIIFLVLIYSQDLNNTDILIFGNNTINLGLLFWPIALFILLAESNATNLTDGLDGLASGCGAIVFTGLAIELIIRGNNENYAIASFCITMAGAWLGFLIFNRKPAKVFMGDTGSLAMGASLAGVALLTNTLWSLLIMGVIFLAESVSVIIQVGVFKTTKKIIGKGYRVFNMAPLHHHFELEGTKETIIVQNFWLITICFVCMAIMLR.

Helical transmembrane passes span 21 to 41 (PTSI…DLFI), 46 to 66 (LLVP…WGII), 92 to 112 (PSMG…LFAL), 117 to 137 (FSKQ…IGLI), 151 to 171 (LSVK…LVLI), 181 to 201 (ILIF…IALF), 217 to 237 (DGLA…ELII), 243 to 263 (NYAI…FLIF), 270 to 290 (VFMG…VALL), 298 to 318 (LIMG…VGVF), and 349 to 369 (TIIV…AIML).

Belongs to the glycosyltransferase 4 family. MraY subfamily. Requires Mg(2+) as cofactor.

The protein resides in the cell inner membrane. The catalysed reaction is UDP-N-acetyl-alpha-D-muramoyl-L-alanyl-gamma-D-glutamyl-meso-2,6-diaminopimeloyl-D-alanyl-D-alanine + di-trans,octa-cis-undecaprenyl phosphate = di-trans,octa-cis-undecaprenyl diphospho-N-acetyl-alpha-D-muramoyl-L-alanyl-D-glutamyl-meso-2,6-diaminopimeloyl-D-alanyl-D-alanine + UMP. It participates in cell wall biogenesis; peptidoglycan biosynthesis. Catalyzes the initial step of the lipid cycle reactions in the biosynthesis of the cell wall peptidoglycan: transfers peptidoglycan precursor phospho-MurNAc-pentapeptide from UDP-MurNAc-pentapeptide onto the lipid carrier undecaprenyl phosphate, yielding undecaprenyl-pyrophosphoryl-MurNAc-pentapeptide, known as lipid I. The sequence is that of Phospho-N-acetylmuramoyl-pentapeptide-transferase from Prochlorococcus marinus (strain SARG / CCMP1375 / SS120).